The following is a 261-amino-acid chain: Phosphatidylglycerol--prolipoprotein diacylglyceryl transferase (261 aa).

3 helical membrane-spanning segments follow: residues 20-40, 54-74, and 88-108; these read LAIH…VWLA, IIDF…LYYV, and IIAI…GAIV. Arg-139 is an a 1,2-diacyl-sn-glycero-3-phospho-(1'-sn-glycerol) binding site. 2 helical membrane-spanning segments follow: residues 175 to 195 and 235 to 255; these read MPTF…VMVF and ARVS…LFVY.

It belongs to the Lgt family.

Its subcellular location is the cell membrane. The catalysed reaction is L-cysteinyl-[prolipoprotein] + a 1,2-diacyl-sn-glycero-3-phospho-(1'-sn-glycerol) = an S-1,2-diacyl-sn-glyceryl-L-cysteinyl-[prolipoprotein] + sn-glycerol 1-phosphate + H(+). The protein operates within protein modification; lipoprotein biosynthesis (diacylglyceryl transfer). Catalyzes the transfer of the diacylglyceryl group from phosphatidylglycerol to the sulfhydryl group of the N-terminal cysteine of a prolipoprotein, the first step in the formation of mature lipoproteins. This is Phosphatidylglycerol--prolipoprotein diacylglyceryl transferase from Lactococcus lactis subsp. cremoris (strain MG1363).